The following is a 395-amino-acid chain: Zinc-regulated GTPase metalloprotein activator 1A (395 aa).

The segment at 1–22 (MLPAVGSADEEEDPAEEDCPEL) is disordered. Residues 8–20 (ADEEEDPAEEDCP) show a composition bias toward acidic residues. The psi-PxLVp motif signature appears at 17-24 (EDCPELVP). Residue 49–56 (GYLGAGKT) participates in GTP binding. Zn(2+) contacts are provided by Cys-107, Cys-109, and Cys-110. The short motif at 107–110 (CLCC) is the CXCC motif element. GTP-binding positions include 110–114 (CSVKD) and 203–206 (NKTD). In terms of domain architecture, CobW C-terminal spans 274-377 (IVTITFEVPG…ILKQLFIATV (104 aa)).

The protein belongs to the SIMIBI class G3E GTPase family. ZNG1 subfamily. In terms of tissue distribution, ubiquitously expressed. Up-regulated in cultured astrocytes treated with dopamine.

It is found in the nucleus. The catalysed reaction is GTP + H2O = GDP + phosphate + H(+). Zinc chaperone that directly transfers zinc cofactor to target metalloproteins, thereby activating them. Catalyzes zinc insertion into the active site of methionine aminopeptidase METAP1, which function to cleave the initiator methionine from polypeptides during or after protein translation. Mechanistically, the N-terminal psi-PxLVp motif binds to the C6H2-type zinc finger of inactive form of METAP1. After formation of the docked complex, zinc is transferred from the CXCC motif in the GTPase domain of ZNG1A to the zinc binding site in the peptidase domain of METAP1 in a process requiring GTP hydrolysis. GTP/GDP exchange is required for release of active METAP1. The protein is Zinc-regulated GTPase metalloprotein activator 1A of Homo sapiens (Human).